We begin with the raw amino-acid sequence, 221 residues long: GTP cyclohydrolase III (221 aa).

The protein belongs to the archaeal-type GTP cyclohydrolase family.

It catalyses the reaction GTP + 3 H2O = 2-amino-5-formylamino-6-(5-phospho-D-ribosylamino)pyrimidin-4(3H)-one + 2 phosphate + 2 H(+). In terms of biological role, catalyzes the formation of 2-amino-5-formylamino-6-ribofuranosylamino-4(3H)-pyrimidinone ribonucleotide monophosphate and inorganic phosphate from GTP. Also has an independent pyrophosphate phosphohydrolase activity. In Pyrobaculum islandicum (strain DSM 4184 / JCM 9189 / GEO3), this protein is GTP cyclohydrolase III.